Reading from the N-terminus, the 147-residue chain is UPF0178 protein VIBHAR_03247 (147 aa).

It belongs to the UPF0178 family.

The chain is UPF0178 protein VIBHAR_03247 from Vibrio campbellii (strain ATCC BAA-1116).